Consider the following 308-residue polypeptide: Reticulon-like protein 1 (308 aa).

2 stretches are compositionally biased toward polar residues: residues 1–17 (MSEQ…SVTA) and 41–66 (PSTE…IQNI). Disordered stretches follow at residues 1 to 22 (MSEQ…DVAA) and 41 to 92 (PSTE…CPVS). Residue Asn-65 is glycosylated (N-linked (GlcNAc...) asparagine). The span at 67 to 81 (SSSSSEPHHTSQSTP) shows a compositional bias: low complexity. 2 N-linked (GlcNAc...) asparagine glycosylation sites follow: Asn-113 and Asn-135. In terms of domain architecture, Reticulon spans 127–308 (LWSVLTWKNT…TETINTTVNK (182 aa)). 4 helical membrane-spanning segments follow: residues 138–158 (CSFS…WINL), 166–186 (FRYV…ASNG), 233–253 (PILT…SGFL), and 255–275 (YKSL…LYVC). An N-linked (GlcNAc...) asparagine glycan is attached at Asn-303.

Interacts with TTS1 and YOP1.

It localises to the endoplasmic reticulum membrane. The protein resides in the nucleus membrane. In terms of biological role, required for the correct positioning of the cellular division plane by delimiting the actomyosin ring assembly at the cell equator. Overexpression causes cell lysis. This Schizosaccharomyces pombe (strain 972 / ATCC 24843) (Fission yeast) protein is Reticulon-like protein 1 (rtn1).